A 1215-amino-acid polypeptide reads, in one-letter code: Homeodomain-interacting protein kinase 3 (1215 aa).

K27 is covalently cross-linked (Glycyl lysine isopeptide (Lys-Gly) (interchain with G-Cter in SUMO2)). The region spanning 197 to 525 (YEVLDFLGRG…PAETLNHPFV (329 aa)) is the Protein kinase domain. Residues 203–211 (LGRGTFGQV) and K226 each bind ATP. Residue D322 is the Proton acceptor of the active site. At Y359 the chain carries Phosphotyrosine. The segment at 767 to 944 (QNRGILVKLM…NSMSDEEQES (178 aa)) is interaction with AR. An interaction with FAS region spans residues 796 to 891 (NTNIPHSAFI…SQRHSLRECK (96 aa)). The interval 855-1011 (QTIIIADSPS…ENGLNADEHM (157 aa)) is required for localization to nuclear speckles. Positions 866 to 918 (AVSVITISSDTDEEETSQRHSLRECKGSLDCEACQSTLNIDRMCSLSSPDSTL) are SUMO interaction motifs (SIM); required for nuclear localization and kinase activity. An interaction with UBL1 region spans residues 870 to 880 (ITISSDTDEEE). Positions 912–929 (SSPDSTLSTSSSGQSSPS) are enriched in low complexity. The disordered stretch occupies residues 912–987 (SSPDSTLSTS…ELVSSADTET (76 aa)). The segment covering 945-957 (SCDTVDGSPTSDS) has biased composition (polar residues). K1208 participates in a covalent cross-link: Glycyl lysine isopeptide (Lys-Gly) (interchain with G-Cter in SUMO).

Belongs to the protein kinase superfamily. CMGC Ser/Thr protein kinase family. HIPK subfamily. As to quaternary structure, interacts with Nkx1-2. Interacts with FAS and DAXX. Probably part of a complex consisting of HIPK3, FAS and FADD. Interacts with and stabilizes ligand-bound androgen receptor (AR). Interacts with UBL1/SUMO-1. Binds to NR5A1/SF1, SPEN/MINT and RUNX2. In terms of processing, autophosphorylated, but autophosphorylation is not required for catalytic activity. May be sumoylated. Overexpressed in multidrug resistant cells. Highly expressed in heart and skeletal muscle, and at lower levels in placenta, pancreas, brain, spleen, prostate, thymus, testis, small intestine, colon and leukocytes. Not found in liver and lung.

It localises to the cytoplasm. Its subcellular location is the nucleus. The catalysed reaction is L-seryl-[protein] + ATP = O-phospho-L-seryl-[protein] + ADP + H(+). It carries out the reaction L-threonyl-[protein] + ATP = O-phospho-L-threonyl-[protein] + ADP + H(+). Its function is as follows. Serine/threonine-protein kinase involved in transcription regulation, apoptosis and steroidogenic gene expression. Phosphorylates JUN and RUNX2. Seems to negatively regulate apoptosis by promoting FADD phosphorylation. Enhances androgen receptor-mediated transcription. May act as a transcriptional corepressor for NK homeodomain transcription factors. The phosphorylation of NR5A1 activates SF1 leading to increased steroidogenic gene expression upon cAMP signaling pathway stimulation. In osteoblasts, supports transcription activation: phosphorylates RUNX2 that synergizes with SPEN/MINT to enhance FGFR2-mediated activation of the osteocalcin FGF-responsive element (OCFRE). The polypeptide is Homeodomain-interacting protein kinase 3 (HIPK3) (Homo sapiens (Human)).